The sequence spans 396 residues: Zinc metalloproteinase nas-19 (396 aa).

A signal peptide spans methionine 1–cysteine 20. Residues arginine 38–tryptophan 231 form the Peptidase M12A domain. Asparagine 79 carries an N-linked (GlcNAc...) asparagine glycan. Cystine bridges form between cysteine 82-cysteine 230, cysteine 105-cysteine 130, cysteine 232-cysteine 252, and cysteine 254-cysteine 263. Histidine 138 is a binding site for Zn(2+). Glutamate 139 is an active-site residue. 2 residues coordinate Zn(2+): histidine 142 and histidine 148. The EGF-like domain occupies asparagine 225 to aspartate 264. Asparagine 310 is a glycosylation site (N-linked (GlcNAc...) asparagine).

Zn(2+) is required as a cofactor.

The protein resides in the secreted. Metalloprotease. In Caenorhabditis elegans, this protein is Zinc metalloproteinase nas-19 (nas-19).